The following is a 476-amino-acid chain: Glycogen synthase (476 aa).

Residue Lys-15 participates in ADP-alpha-D-glucose binding.

Belongs to the glycosyltransferase 1 family. Bacterial/plant glycogen synthase subfamily.

The catalysed reaction is [(1-&gt;4)-alpha-D-glucosyl](n) + ADP-alpha-D-glucose = [(1-&gt;4)-alpha-D-glucosyl](n+1) + ADP + H(+). The protein operates within glycan biosynthesis; glycogen biosynthesis. Synthesizes alpha-1,4-glucan chains using ADP-glucose. The chain is Glycogen synthase (glgA) from Haemophilus influenzae (strain ATCC 51907 / DSM 11121 / KW20 / Rd).